Reading from the N-terminus, the 495-residue chain is Phytochrome A type 5 (495 aa).

Low complexity predominate over residues 1–21 (MSSSRPASSSSSRNRQSSQAR). The segment at 1 to 24 (MSSSRPASSSSSRNRQSSQARVLA) is disordered. Positions 217 to 402 (SMEMLCNTVV…VFAVHVNREF (186 aa)) constitute a GAF domain. A phytochromobilin-binding site is contributed by Cys-322.

The protein belongs to the phytochrome family. In terms of assembly, homodimer. Post-translationally, contains one covalently linked phytochromobilin chromophore.

Regulatory photoreceptor which exists in two forms that are reversibly interconvertible by light: the Pr form that absorbs maximally in the red region of the spectrum and the Pfr form that absorbs maximally in the far-red region. Photoconversion of Pr to Pfr induces an array of morphogenic responses, whereas reconversion of Pfr to Pr cancels the induction of those responses. Pfr controls the expression of a number of nuclear genes including those encoding the small subunit of ribulose-bisphosphate carboxylase, chlorophyll A/B binding protein, protochlorophyllide reductase, rRNA, etc. It also controls the expression of its own gene(s) in a negative feedback fashion. The chain is Phytochrome A type 5 (PHYA5) from Avena sativa (Oat).